The chain runs to 293 residues: Extracellular metalloprotease MGYG_00389 (293 aa).

An N-terminal signal peptide occupies residues 1–19; sequence MRFSVFLPAIAALSSAVAA. 2 N-linked (GlcNAc...) asparagine glycosylation sites follow: N49 and N53. A Zn(2+)-binding site is contributed by H184. Residue E185 is part of the active site. Residue H188 coordinates Zn(2+). A disulfide bridge connects residues C223 and C249. Positions 270–293 are disordered; that stretch reads GSGSGSVTRPRPKPPVLMDYEHRL.

It belongs to the peptidase M43B family.

It is found in the secreted. In terms of biological role, secreted metalloproteinase that allows assimilation of proteinaceous substrates. Plays a pivotal role as a pathogenicity determinant during infections and contributes to the ability of the pathogen to persist within the mammalian host. This Arthroderma gypseum (strain ATCC MYA-4604 / CBS 118893) (Microsporum gypseum) protein is Extracellular metalloprotease MGYG_00389.